A 417-amino-acid polypeptide reads, in one-letter code: MQTYLVGGAVRDYLLGLPVKDRDWVVVGADAQTMLAQGFQPVGKDFPVFLHPETHEEYALARTERKTAKGYVGFSFHADKDVTLEQDLMRRDLTINAMAQDADGKIIDPFGGQRDLAAGILRHVSPAFAEDPVRILRTARFAARYKFEIAEETIKLMRQMVENGEADALVAERVWQEFAKGLMEKNPRKMIEVLRECGALKVLLPEVNALFGVPQRADYHPEIDSGIHTLMTLQRAADMGLSLPERYAALLHDLGKAKTPSDILPRHHGHDLAGVEPVREVNQRLRAPKHCAELAELVCRWHIIFHQVGQLKSQTILNVLKKTDAFRRPERFQTALNVCIADTQGRLNREHTPYPQRAHWLALLEAANQADSGKIAAECRAQGKAHLIAEQIDRARLAQIAPLQKAFRAAQDKTEKH.

Residues G8 and R11 each coordinate ATP. G8 and R11 together coordinate CTP. Mg(2+) is bound by residues D21 and D23. Positions 91, 137, and 140 each coordinate ATP. Residues R91, R137, and R140 each contribute to the CTP site. The 102-residue stretch at 225 to 326 (SGIHTLMTLQ…LNVLKKTDAF (102 aa)) folds into the HD domain.

It belongs to the tRNA nucleotidyltransferase/poly(A) polymerase family. Bacterial CCA-adding enzyme type 1 subfamily. As to quaternary structure, monomer. Can also form homodimers and oligomers. Mg(2+) is required as a cofactor. Ni(2+) serves as cofactor.

The enzyme catalyses a tRNA precursor + 2 CTP + ATP = a tRNA with a 3' CCA end + 3 diphosphate. It catalyses the reaction a tRNA with a 3' CCA end + 2 CTP + ATP = a tRNA with a 3' CCACCA end + 3 diphosphate. Functionally, catalyzes the addition and repair of the essential 3'-terminal CCA sequence in tRNAs without using a nucleic acid template. Adds these three nucleotides in the order of C, C, and A to the tRNA nucleotide-73, using CTP and ATP as substrates and producing inorganic pyrophosphate. tRNA 3'-terminal CCA addition is required both for tRNA processing and repair. Also involved in tRNA surveillance by mediating tandem CCA addition to generate a CCACCA at the 3' terminus of unstable tRNAs. While stable tRNAs receive only 3'-terminal CCA, unstable tRNAs are marked with CCACCA and rapidly degraded. The sequence is that of Multifunctional CCA protein from Neisseria meningitidis serogroup B (strain ATCC BAA-335 / MC58).